The primary structure comprises 417 residues: Serine hydroxymethyltransferase (417 aa).

(6S)-5,6,7,8-tetrahydrofolate is bound by residues Leu-121 and 125–127 (GHL). Lys-229 is subject to N6-(pyridoxal phosphate)lysine. (6S)-5,6,7,8-tetrahydrofolate is bound at residue 355–357 (SPF).

The protein belongs to the SHMT family. Homodimer. Pyridoxal 5'-phosphate serves as cofactor.

It localises to the cytoplasm. The catalysed reaction is (6R)-5,10-methylene-5,6,7,8-tetrahydrofolate + glycine + H2O = (6S)-5,6,7,8-tetrahydrofolate + L-serine. It functions in the pathway one-carbon metabolism; tetrahydrofolate interconversion. The protein operates within amino-acid biosynthesis; glycine biosynthesis; glycine from L-serine: step 1/1. In terms of biological role, catalyzes the reversible interconversion of serine and glycine with tetrahydrofolate (THF) serving as the one-carbon carrier. This reaction serves as the major source of one-carbon groups required for the biosynthesis of purines, thymidylate, methionine, and other important biomolecules. Also exhibits THF-independent aldolase activity toward beta-hydroxyamino acids, producing glycine and aldehydes, via a retro-aldol mechanism. In Shewanella baltica (strain OS155 / ATCC BAA-1091), this protein is Serine hydroxymethyltransferase.